The following is a 381-amino-acid chain: Cytochrome P450 105C1 (381 aa).

Cys-330 lines the heme pocket.

Belongs to the cytochrome P450 family. It depends on heme as a cofactor.

It localises to the cytoplasm. The sequence is that of Cytochrome P450 105C1 (cyp105C1) from Streptomyces sp.